The chain runs to 211 residues: ATP-dependent Clp protease proteolytic subunit 2 (211 aa).

S106 functions as the Nucleophile in the catalytic mechanism. Residue H131 is part of the active site.

This sequence belongs to the peptidase S14 family. As to quaternary structure, fourteen ClpP subunits assemble into 2 heptameric rings which stack back to back to give a disk-like structure with a central cavity, resembling the structure of eukaryotic proteasomes.

It localises to the cytoplasm. The catalysed reaction is Hydrolysis of proteins to small peptides in the presence of ATP and magnesium. alpha-casein is the usual test substrate. In the absence of ATP, only oligopeptides shorter than five residues are hydrolyzed (such as succinyl-Leu-Tyr-|-NHMec, and Leu-Tyr-Leu-|-Tyr-Trp, in which cleavage of the -Tyr-|-Leu- and -Tyr-|-Trp bonds also occurs).. Its function is as follows. Cleaves peptides in various proteins in a process that requires ATP hydrolysis. Has a chymotrypsin-like activity. Plays a major role in the degradation of misfolded proteins. The polypeptide is ATP-dependent Clp protease proteolytic subunit 2 (Bradyrhizobium diazoefficiens (strain JCM 10833 / BCRC 13528 / IAM 13628 / NBRC 14792 / USDA 110)).